The primary structure comprises 822 residues: Molybdenum cofactor sulfurase (822 aa).

Lys245 is modified (N6-(pyridoxal phosphate)lysine). The active site involves Cys412. An MOSC domain is found at Leu658–Ile814.

The protein belongs to the class-V pyridoxal-phosphate-dependent aminotransferase family. MOCOS subfamily. The cofactor is pyridoxal 5'-phosphate.

It catalyses the reaction Mo-molybdopterin + L-cysteine + AH2 = thio-Mo-molybdopterin + L-alanine + A + H2O. It participates in cofactor biosynthesis; molybdopterin biosynthesis. Functionally, sulfurates the molybdenum cofactor. Sulfation of molybdenum is essential for xanthine dehydrogenase (XDH) and aldehyde oxidase (ADO) enzymes in which molybdenum cofactor is liganded by 1 oxygen and 1 sulfur atom in active form. The sequence is that of Molybdenum cofactor sulfurase from Bombyx mori (Silk moth).